The sequence spans 1905 residues: von Willebrand factor A domain-containing protein 8 (1905 aa).

The N-terminal 45 residues, 1–45 (MQSRLLLLGAPGGLGDVASRRVRLLLRQVLRGRPGGDQQRLEVRL), are a transit peptide targeting the mitochondrion. The segment at 1–260 (MQSRLLLLGA…PLDPPLRSRF (260 aa)) is interaction with PEX7. 446 to 453 (GGKGCGKT) contributes to the ATP binding site. A compositionally biased stretch (basic and acidic residues) spans 1541-1560 (ERDSNEDVSDPKHGKEDPDN). Residues 1541–1583 (ERDSNEDVSDPKHGKEDPDNMPHVGGNTWAGGTGGRDTAGLGG) are disordered. Residues 1568-1583 (TWAGGTGGRDTAGLGG) show a composition bias toward gly residues. Residues 1714-1896 (RLRLVVDVSG…KKIPQILQQI (183 aa)) form the VWFA domain.

As to quaternary structure, monomer. Interacts with PEX7. Interacts with PEX5 in a PEX7-dependent manner. As to expression, isoform 1 is predominantly expressed in liver, kidney, pancreas, heart, and skeletal muscle (at protein level).

It localises to the mitochondrion. Exhibits ATPase activity in vitro. This chain is von Willebrand factor A domain-containing protein 8 (Vwa8), found in Mus musculus (Mouse).